The primary structure comprises 229 residues: DNA mismatch repair protein MutH (229 aa).

It belongs to the MutH family.

It localises to the cytoplasm. Its function is as follows. Sequence-specific endonuclease that cleaves unmethylated GATC sequences. It is involved in DNA mismatch repair. This is DNA mismatch repair protein MutH from Shigella flexneri.